The chain runs to 456 residues: Outer membrane efflux protein BepC (456 aa).

The first 28 residues, 1–28 (MRYTVFKACKELVAAAVLLSGTVLTGQA), serve as a signal peptide directing secretion. Residues 312 to 341 (RTSAQIRQSKEQLGQARIEVDVVQDKVRQA) adopt a coiled-coil conformation.

Belongs to the outer membrane factor (OMF) (TC 1.B.17) family. Probably part of a tripartite efflux pump, which is composed of an outer membrane efflux protein, an inner membrane protein and a protein that expands the periplasmic space. Could form a tripartite pump with BepD and BepE or with BepF and BepG.

It localises to the cell outer membrane. Its function is as follows. Involved in the efflux of toxic and relatively hydrophobic compounds. Influences survival inside the host. The protein is Outer membrane efflux protein BepC (bepC) of Brucella suis biovar 1 (strain 1330).